The sequence spans 189 residues: GTP cyclohydrolase 1 (189 aa).

3 residues coordinate Zn(2+): cysteine 78, histidine 81, and cysteine 150.

Belongs to the GTP cyclohydrolase I family. In terms of assembly, toroid-shaped homodecamer, composed of two pentamers of five dimers.

It carries out the reaction GTP + H2O = 7,8-dihydroneopterin 3'-triphosphate + formate + H(+). The protein operates within cofactor biosynthesis; 7,8-dihydroneopterin triphosphate biosynthesis; 7,8-dihydroneopterin triphosphate from GTP: step 1/1. The chain is GTP cyclohydrolase 1 from Listeria monocytogenes serovar 1/2a (strain ATCC BAA-679 / EGD-e).